Reading from the N-terminus, the 348-residue chain is D-erythrose-4-phosphate dehydrogenase (348 aa).

Arginine 12–isoleucine 13 contributes to the NAD(+) binding site. Substrate contacts are provided by residues serine 154–threonine 156, arginine 200, threonine 213–arginine 214, and arginine 236. The Nucleophile role is filled by cysteine 155. Asparagine 318 contacts NAD(+).

The protein belongs to the glyceraldehyde-3-phosphate dehydrogenase family. Epd subfamily. In terms of assembly, homotetramer.

It is found in the cytoplasm. It catalyses the reaction D-erythrose 4-phosphate + NAD(+) + H2O = 4-phospho-D-erythronate + NADH + 2 H(+). It participates in cofactor biosynthesis; pyridoxine 5'-phosphate biosynthesis; pyridoxine 5'-phosphate from D-erythrose 4-phosphate: step 1/5. In terms of biological role, catalyzes the NAD-dependent conversion of D-erythrose 4-phosphate to 4-phosphoerythronate. In Erwinia tasmaniensis (strain DSM 17950 / CFBP 7177 / CIP 109463 / NCPPB 4357 / Et1/99), this protein is D-erythrose-4-phosphate dehydrogenase.